Reading from the N-terminus, the 1341-residue chain is DNA-directed RNA polymerase subunit beta (1341 aa).

Belongs to the RNA polymerase beta chain family. The RNAP catalytic core consists of 2 alpha, 1 beta, 1 beta' and 1 omega subunit. When a sigma factor is associated with the core the holoenzyme is formed, which can initiate transcription.

It catalyses the reaction RNA(n) + a ribonucleoside 5'-triphosphate = RNA(n+1) + diphosphate. Its function is as follows. DNA-dependent RNA polymerase catalyzes the transcription of DNA into RNA using the four ribonucleoside triphosphates as substrates. This is DNA-directed RNA polymerase subunit beta from Vibrio cholerae serotype O1 (strain ATCC 39315 / El Tor Inaba N16961).